The primary structure comprises 138 residues: Small ribosomal subunit protein uS8c (138 aa).

It belongs to the universal ribosomal protein uS8 family. In terms of assembly, part of the 30S ribosomal subunit.

It is found in the plastid. Its subcellular location is the chloroplast. Functionally, one of the primary rRNA binding proteins, it binds directly to 16S rRNA central domain where it helps coordinate assembly of the platform of the 30S subunit. The chain is Small ribosomal subunit protein uS8c (rps8) from Oenothera elata subsp. hookeri (Hooker's evening primrose).